The chain runs to 575 residues: Urease subunit alpha (575 aa).

Residues 138–575 (GAVDCHVHLI…LPMAQRYFLF (438 aa)) enclose the Urease domain. Ni(2+) is bound by residues H143, H145, and K226. K226 carries the post-translational modification N6-carboxylysine. H228 contributes to the substrate binding site. Ni(2+)-binding residues include H255 and H281. H329 functions as the Proton donor in the catalytic mechanism. D369 is a Ni(2+) binding site.

Belongs to the metallo-dependent hydrolases superfamily. Urease alpha subunit family. Heterotrimer of UreA (gamma), UreB (beta) and UreC (alpha) subunits. Three heterotrimers associate to form the active enzyme. Requires Ni cation as cofactor. Carboxylation allows a single lysine to coordinate two nickel ions.

Its subcellular location is the cytoplasm. The catalysed reaction is urea + 2 H2O + H(+) = hydrogencarbonate + 2 NH4(+). It functions in the pathway nitrogen metabolism; urea degradation; CO(2) and NH(3) from urea (urease route): step 1/1. This is Urease subunit alpha from Frankia alni (strain DSM 45986 / CECT 9034 / ACN14a).